Here is a 198-residue protein sequence, read N- to C-terminus: Nucleoside triphosphate pyrophosphatase (198 aa).

The active-site Proton acceptor is aspartate 75.

This sequence belongs to the Maf family. It depends on a divalent metal cation as a cofactor.

Its subcellular location is the cytoplasm. It carries out the reaction a ribonucleoside 5'-triphosphate + H2O = a ribonucleoside 5'-phosphate + diphosphate + H(+). The enzyme catalyses a 2'-deoxyribonucleoside 5'-triphosphate + H2O = a 2'-deoxyribonucleoside 5'-phosphate + diphosphate + H(+). Its function is as follows. Nucleoside triphosphate pyrophosphatase. May have a dual role in cell division arrest and in preventing the incorporation of modified nucleotides into cellular nucleic acids. In Hyphomonas neptunium (strain ATCC 15444), this protein is Nucleoside triphosphate pyrophosphatase.